We begin with the raw amino-acid sequence, 438 residues long: Serine hydroxymethyltransferase (438 aa).

(6S)-5,6,7,8-tetrahydrofolate is bound by residues L133 and 137–139; that span reads GHL. K242 is subject to N6-(pyridoxal phosphate)lysine.

The protein belongs to the SHMT family. As to quaternary structure, homodimer. The cofactor is pyridoxal 5'-phosphate.

Its subcellular location is the cytoplasm. It catalyses the reaction (6R)-5,10-methylene-5,6,7,8-tetrahydrofolate + glycine + H2O = (6S)-5,6,7,8-tetrahydrofolate + L-serine. It participates in one-carbon metabolism; tetrahydrofolate interconversion. It functions in the pathway amino-acid biosynthesis; glycine biosynthesis; glycine from L-serine: step 1/1. In terms of biological role, catalyzes the reversible interconversion of serine and glycine with tetrahydrofolate (THF) serving as the one-carbon carrier. This reaction serves as the major source of one-carbon groups required for the biosynthesis of purines, thymidylate, methionine, and other important biomolecules. Also exhibits THF-independent aldolase activity toward beta-hydroxyamino acids, producing glycine and aldehydes, via a retro-aldol mechanism. The polypeptide is Serine hydroxymethyltransferase (Brucella abortus (strain S19)).